The chain runs to 314 residues: Leucine-rich repeat-containing protein 59 (314 aa).

Residues 1–247 lie on the Cytoplasmic side of the membrane; sequence MNKGKIENIK…VPKAKRSICS (247 aa). 5 LRR repeats span residues 14–35, 38–60, 61–82, 84–106, and 107–126; these read DGNE…ELAA, KATF…CSLT, HLIK…IGQL, NLQH…SQLK, and SLKW…AKAA. Residues 146–216 adopt a coiled-coil conformation; it reads MKVLQEEAEK…AVAAQEQQKK (71 aa). Disordered stretches follow at residues 165–197 and 212–237; these read REQE…KERK and EQQK…APES. Residues 215–225 show a composition bias toward basic residues; that stretch reads KKKKEEKKKKA. A helical transmembrane segment spans residues 248 to 268; the sequence is LFFSLLLKLVLLLVIGVSSVV. Residues 269–314 are Lumenal-facing; the sequence is AVCQLTELRKEAFCIPLNVHFEETVRWAQGLDVVQQVIQKMSDLRT.

Interacts with SGO1.

It is found in the microsome membrane. The protein resides in the endoplasmic reticulum membrane. Its subcellular location is the nucleus envelope. Its function is as follows. Required for nuclear import of FGF1. This Danio rerio (Zebrafish) protein is Leucine-rich repeat-containing protein 59 (lrrc59).